We begin with the raw amino-acid sequence, 660 residues long: Phosphatidylinositol-3-phosphate phosphatase MTMR7 (660 aa).

One can recognise a Myotubularin phosphatase domain in the interval 126–504 (GWVLIDLSEE…FMYKFWSGMY (379 aa)). Asparagine 250, asparagine 275, and isoleucine 276 together coordinate a 1,2-diacyl-sn-glycero-3-phospho-(1D-myo-inositol-3-phosphate). Cysteine 338 functions as the Phosphocysteine intermediate in the catalytic mechanism. Serine 339, aspartate 340, glycine 341, tryptophan 342, aspartate 343, arginine 344, and arginine 384 together coordinate a 1,2-diacyl-sn-glycero-3-phospho-(1D-myo-inositol-3-phosphate). The stretch at 521–551 (LMAVKEETQQLEEELEALEERLEKIQKVQLN) forms a coiled coil. The tract at residues 554 to 660 (KVKSKQSEPS…DSDEAVFLTA (107 aa)) is disordered. Over residues 566 to 596 (SGFSTSDNSIANTPQDYSGNMKSFPSRSPSQ) the composition is skewed to polar residues. The residue at position 578 (threonine 578) is a Phosphothreonine. Positions 641–653 (APSEDSGKDRDSD) are enriched in basic and acidic residues.

The protein belongs to the protein-tyrosine phosphatase family. Non-receptor class myotubularin subfamily. In terms of assembly, heterodimer (via C-terminus) with MTMR9 (via coiled coil domain); the interaction enhances MTMR7 catalytic activity. Does not homodimerize. Interacts with RAB1B (in GDP-bound form). As to expression, expressed specifically in brain.

The protein localises to the cytoplasm. It localises to the endomembrane system. The catalysed reaction is a 1,2-diacyl-sn-glycero-3-phospho-(1D-myo-inositol-3-phosphate) + H2O = a 1,2-diacyl-sn-glycero-3-phospho-(1D-myo-inositol) + phosphate. It catalyses the reaction 1D-myo-inositol 1,3-bisphosphate + H2O = 1D-myo-inositol 1-phosphate + phosphate. Its activity is regulated as follows. Interaction with MTMR9 increases phosphatase activity. Its function is as follows. Lipid phosphatase that specifically dephosphorylates the D-3 position of phosphatidylinositol 3-phosphate (PtdIns(3)P) and inositol 1,3-bisphosphate (Ins(1,3)P2). This Homo sapiens (Human) protein is Phosphatidylinositol-3-phosphate phosphatase MTMR7.